Consider the following 241-residue polypeptide: tRNA pseudouridine synthase A (241 aa).

Asp51 functions as the Nucleophile in the catalytic mechanism. Tyr110 contacts substrate.

The protein belongs to the tRNA pseudouridine synthase TruA family. As to quaternary structure, homodimer.

The enzyme catalyses uridine(38/39/40) in tRNA = pseudouridine(38/39/40) in tRNA. Formation of pseudouridine at positions 38, 39 and 40 in the anticodon stem and loop of transfer RNAs. The protein is tRNA pseudouridine synthase A of Campylobacter jejuni subsp. jejuni serotype O:2 (strain ATCC 700819 / NCTC 11168).